A 227-amino-acid polypeptide reads, in one-letter code: Cytochrome c oxidase subunit 2 (227 aa).

Topologically, residues 1 to 14 are mitochondrial intermembrane; sequence MAYPMQLGFQDATS. A helical membrane pass occupies residues 15 to 45; the sequence is PIMEELLHFHDHTLMIVFLISSLVLYIISLM. Topologically, residues 46 to 59 are mitochondrial matrix; sequence LTTKLTHTSTMDAQ. A helical membrane pass occupies residues 60-87; sequence EVETVWTILPAIILIMIALPSLRILYMM. The Mitochondrial intermembrane segment spans residues 88-227; the sequence is DEINNPSLTV…YFEKWSASML (140 aa). Residues histidine 161, cysteine 196, glutamate 198, cysteine 200, histidine 204, and methionine 207 each coordinate Cu cation. Glutamate 198 is a binding site for Mg(2+). A Phosphotyrosine modification is found at tyrosine 218.

The protein belongs to the cytochrome c oxidase subunit 2 family. In terms of assembly, component of the cytochrome c oxidase (complex IV, CIV), a multisubunit enzyme composed of 14 subunits. The complex is composed of a catalytic core of 3 subunits MT-CO1, MT-CO2 and MT-CO3, encoded in the mitochondrial DNA, and 11 supernumerary subunits COX4I, COX5A, COX5B, COX6A, COX6B, COX6C, COX7A, COX7B, COX7C, COX8 and NDUFA4, which are encoded in the nuclear genome. The complex exists as a monomer or a dimer and forms supercomplexes (SCs) in the inner mitochondrial membrane with NADH-ubiquinone oxidoreductase (complex I, CI) and ubiquinol-cytochrome c oxidoreductase (cytochrome b-c1 complex, complex III, CIII), resulting in different assemblies (supercomplex SCI(1)III(2)IV(1) and megacomplex MCI(2)III(2)IV(2)). Found in a complex with TMEM177, COA6, COX18, COX20, SCO1 and SCO2. Interacts with TMEM177 in a COX20-dependent manner. Interacts with COX20. Interacts with COX16. Cu cation serves as cofactor.

The protein localises to the mitochondrion inner membrane. It carries out the reaction 4 Fe(II)-[cytochrome c] + O2 + 8 H(+)(in) = 4 Fe(III)-[cytochrome c] + 2 H2O + 4 H(+)(out). Its function is as follows. Component of the cytochrome c oxidase, the last enzyme in the mitochondrial electron transport chain which drives oxidative phosphorylation. The respiratory chain contains 3 multisubunit complexes succinate dehydrogenase (complex II, CII), ubiquinol-cytochrome c oxidoreductase (cytochrome b-c1 complex, complex III, CIII) and cytochrome c oxidase (complex IV, CIV), that cooperate to transfer electrons derived from NADH and succinate to molecular oxygen, creating an electrochemical gradient over the inner membrane that drives transmembrane transport and the ATP synthase. Cytochrome c oxidase is the component of the respiratory chain that catalyzes the reduction of oxygen to water. Electrons originating from reduced cytochrome c in the intermembrane space (IMS) are transferred via the dinuclear copper A center (CU(A)) of subunit 2 and heme A of subunit 1 to the active site in subunit 1, a binuclear center (BNC) formed by heme A3 and copper B (CU(B)). The BNC reduces molecular oxygen to 2 water molecules using 4 electrons from cytochrome c in the IMS and 4 protons from the mitochondrial matrix. The polypeptide is Cytochrome c oxidase subunit 2 (MT-CO2) (Capra hircus (Goat)).